The sequence spans 673 residues: Translation factor GUF1 homolog, mitochondrial (673 aa).

One can recognise a tr-type G domain in the interval 68–260 (ERIRNFSIIA…AVIERIPSPP (193 aa)). GTP is bound by residues 77-84 (AHVDHGKS), 153-157 (DTPGH), and 207-210 (NKID).

The protein belongs to the TRAFAC class translation factor GTPase superfamily. Classic translation factor GTPase family. LepA subfamily.

It localises to the mitochondrion inner membrane. It catalyses the reaction GTP + H2O = GDP + phosphate + H(+). In terms of biological role, promotes mitochondrial protein synthesis. May act as a fidelity factor of the translation reaction, by catalyzing a one-codon backward translocation of tRNAs on improperly translocated ribosomes. Binds to mitochondrial ribosomes in a GTP-dependent manner. This chain is Translation factor GUF1 homolog, mitochondrial, found in Ricinus communis (Castor bean).